A 318-amino-acid polypeptide reads, in one-letter code: Taste receptor type 2 member 60 (318 aa).

The Extracellular segment spans residues 1-7 (MNGDHMV). A helical membrane pass occupies residues 8–28 (LGSSVTDKKAIILVTILLLLR). Residues 29–40 (LVAIAGNGFITA) lie on the Cytoplasmic side of the membrane. Residues 41–61 (ALGVEWVLRRMLLPCDKLLVS) traverse the membrane as a helical segment. Residues 62–88 (LGASHFCLQSVVMGKTIYVFLYPMAFP) are Extracellular-facing. A helical membrane pass occupies residues 89 to 109 (YNPVLQFLAFQWDFLNAATLW). Residues 110-128 (FSTWLSVFYCVKIATFTHP) are Cytoplasmic-facing. A helical transmembrane segment spans residues 129-149 (VFFWLKHKLSGWLPWMVFSYV). Residues 150–183 (GLSSFTTILFFIGNHRMYQNYLKNHLQPWNVTGN) are Extracellular-facing. N-linked (GlcNAc...) asparagine glycosylation is present at N179. A helical transmembrane segment spans residues 184 to 204 (SIRSYCEKFYLFPLKMITWTM). Topologically, residues 205–234 (PTAVFFICMILLITSLGRHMKKALLTTSGF) are cytoplasmic. The helical transmembrane segment at 235–255 (REPSVQAHIKALLALLSFAML) threads the bilayer. The Extracellular segment spans residues 256–264 (FISYFLSLV). The chain crosses the membrane as a helical span at residues 265–285 (FSAAGIFPPLDFKFWVWESVI). Over 286-318 (YLCAAVHPIILLFSNCRLRAVLKSRRSSRCGTP) the chain is Cytoplasmic.

It belongs to the G-protein coupled receptor T2R family.

The protein resides in the membrane. Its function is as follows. Receptor that may play a role in the perception of bitterness and is gustducin-linked. May play a role in sensing the chemical composition of the gastrointestinal content. The activity of this receptor may stimulate alpha gustducin, mediate PLC-beta-2 activation and lead to the gating of TRPM5. In Pan troglodytes (Chimpanzee), this protein is Taste receptor type 2 member 60 (TAS2R60).